Consider the following 634-residue polypeptide: RING finger protein 207 (634 aa).

An RING-type zinc finger spans residues 25 to 63 (CHLCQEQYEHPCLLDCYHTFCASCLRGRVADSRLTCPVC). The B box-type; atypical zinc finger occupies 93–145 (EETVQCANCDLECKKQDVDAMYYCNTCCQPLCRDCRETTHKAKMFSRHEIVSL). Positions 98, 101, 127, and 132 each coordinate Zn(2+). Residues 575-634 (YEDSTSTADTQPSNELSCNTEDNWTLNSLSEETNPKNKDYYRTNKQKNTTDSTNRKEIPM) form a disordered region. A compositionally biased stretch (polar residues) spans 577–606 (DSTSTADTQPSNELSCNTEDNWTLNSLSEE). The segment covering 607-616 (TNPKNKDYYR) has biased composition (basic and acidic residues).

It is found in the cytoplasm. Functionally, plays a role in cardiac repolarization possibly by stabilizing membrane expression of the potassium channel kcnh6a/zerg, or by assisting its synthesis, folding or export from the endoplasmic reticulum, in a heat shock protein-dependent manner. The sequence is that of RING finger protein 207 (rnf207b) from Danio rerio (Zebrafish).